The primary structure comprises 373 residues: Glutamate 5-kinase (373 aa).

Lys-15 lines the ATP pocket. The substrate site is built by Ser-54, Asp-141, and Asn-153. ATP-binding positions include 173–174 and 215–221; these read SD and TGGMATK. The PUA domain maps to 280 to 358; it reads RGKLLVDEGA…SEIEVVLGYK (79 aa).

The protein belongs to the glutamate 5-kinase family.

It localises to the cytoplasm. It carries out the reaction L-glutamate + ATP = L-glutamyl 5-phosphate + ADP. The protein operates within amino-acid biosynthesis; L-proline biosynthesis; L-glutamate 5-semialdehyde from L-glutamate: step 1/2. In terms of biological role, catalyzes the transfer of a phosphate group to glutamate to form L-glutamate 5-phosphate. In Syntrophotalea carbinolica (strain DSM 2380 / NBRC 103641 / GraBd1) (Pelobacter carbinolicus), this protein is Glutamate 5-kinase.